Here is a 427-residue protein sequence, read N- to C-terminus: Serine hydroxymethyltransferase (427 aa).

122–124 (GHI) contacts (6S)-5,6,7,8-tetrahydrofolate. Residue Lys-228 is modified to N6-(pyridoxal phosphate)lysine.

It belongs to the SHMT family. As to quaternary structure, homodimer. Pyridoxal 5'-phosphate serves as cofactor.

The protein resides in the cytoplasm. It participates in amino-acid biosynthesis; glycine biosynthesis; glycine from L-serine: step 1/1. Functionally, catalyzes the reversible interconversion of serine and glycine with a modified folate serving as the one-carbon carrier. Also exhibits a pteridine-independent aldolase activity toward beta-hydroxyamino acids, producing glycine and aldehydes, via a retro-aldol mechanism. This Thermococcus onnurineus (strain NA1) protein is Serine hydroxymethyltransferase.